The chain runs to 198 residues: Suppressor of cytokine signaling 2 (198 aa).

The interval 1-29 (MTLRCLEPSGNGGEGTRSQWGTAGSAEEP) is disordered. An interaction with AREL1 region spans residues 1–75 (MTLRCLEPSG…PEGTFLIRDS (75 aa)). Position 30 is a phosphoserine (S30). The 109-residue stretch at 48 to 156 (WYWGSMTVNE…TVHLYLTKPL (109 aa)) folds into the SH2 domain. Residue S52 is modified to Phosphoserine; by PKC. The 47-residue stretch at 151-197 (YLTKPLYTSAPSLQHLCRLTINKCTGAIWGLPLPTRLKDYLEEYKFQ) folds into the SOCS box domain. A Glycyl lysine isopeptide (Lys-Gly) (interchain with G-Cter in ubiquitin) cross-link involves residue K173.

In terms of assembly, substrate-recognition component of the ECS(SOCS2) complex, composed of SOCS2, CUL5, ELOB, ELOC and RNF7/RBX2. Interacts with IGF1R. Interacts with DCUN1D1. Ubiquitinated; mediated by AREL1 and leading to its subsequent proteasomal degradation. Ubiquitination is dependent on its phosphorylation at Ser-52, by PKC. Ubiquitination is stimulated by LPS. Post-translationally, phosphorylation at Ser-52 by PKC facilitates its ubiquitination and proteasomal degradation. In terms of tissue distribution, high expression in heart, placenta, lung, kidney and prostate. Predominantly expressed in pulmonary epithelia cells, specifically type II pneumocytes.

The protein resides in the cytoplasm. It functions in the pathway protein modification; protein ubiquitination. Substrate-binding is prevented by the covalent inhibitor MN551 that cross-links with Cys-111. Also inhibited by a MN551 derivative, MN714, which contains a pivaloyloxymethyl that allows cell permeability. Its function is as follows. Substrate-recognition component of a cullin-5-RING E3 ubiquitin-protein ligase complex (ECS complex, also named CRL5 complex), which mediates the ubiquitination and subsequent proteasomal degradation of target proteins, such as EPOR and GHR. Specifically recognizes and binds phosphorylated proteins via its SH2 domain, promoting their ubiquitination. The ECS(SOCS2) complex acts as a key regulator of growth hormone receptor (GHR) levels by mediating ubiquitination and degradation of GHR, following GHR phosphorylation by JAK2. The ECS(SOCS2) also catalyzes ubiquitination and degradation of JAK2-phosphorylated EPOR. This Homo sapiens (Human) protein is Suppressor of cytokine signaling 2.